The chain runs to 381 residues: MALDKRIWMHFDLLPFVFIIPLLVVSFLLIFESSAVLSLKQGVYYAIGFLLFWVVFFIPFRKLDRWLFALYWACVILLALVDFMGSSKLGAQRWLVIPFTSITLQPSEPVKIAILLLLAHLIKINPPPFKGYDWGMFLKLSFYICLPAALILKQPDLGTALIVLIMGFGILLIVGLRTRVWLPLLIALIVASPIAYHFLHDYQKKRIADFLSEKPNYHVMQSIIAIGSGGFLGKSKEACTQTKFKFLPIATSDFIFAYFVERFGFLGAILLFAIYIGLSLHLFFYLFESNSDWFLKIVALGISILIFVYSSVNIAMTLGLAPVVGIPLPLFSYGGSSFITFMILFAILENLLAFRYIFGNNSKPSFGNFGFLAQLVRALGS.

Transmembrane regions (helical) follow at residues F11 to F31, K40 to F60, W66 to S86, I102 to I122, Y132 to L152, D156 to L176, V180 to H200, F263 to F283, I297 to T317, and L328 to L348.

This sequence belongs to the SEDS family. MrdB/RodA subfamily.

It is found in the cell inner membrane. It catalyses the reaction [GlcNAc-(1-&gt;4)-Mur2Ac(oyl-L-Ala-gamma-D-Glu-L-Lys-D-Ala-D-Ala)](n)-di-trans,octa-cis-undecaprenyl diphosphate + beta-D-GlcNAc-(1-&gt;4)-Mur2Ac(oyl-L-Ala-gamma-D-Glu-L-Lys-D-Ala-D-Ala)-di-trans,octa-cis-undecaprenyl diphosphate = [GlcNAc-(1-&gt;4)-Mur2Ac(oyl-L-Ala-gamma-D-Glu-L-Lys-D-Ala-D-Ala)](n+1)-di-trans,octa-cis-undecaprenyl diphosphate + di-trans,octa-cis-undecaprenyl diphosphate + H(+). The protein operates within cell wall biogenesis; peptidoglycan biosynthesis. Its function is as follows. Peptidoglycan polymerase that is essential for cell wall elongation. The chain is Peptidoglycan glycosyltransferase MrdB from Helicobacter pylori (strain J99 / ATCC 700824) (Campylobacter pylori J99).